The following is a 113-amino-acid chain: Histidine triad nucleotide-binding protein (113 aa).

Cys5 and Cys8 together coordinate Zn(2+). The region spanning 6–113 is the HIT domain; it reads IFCKIAQKQI…GGKKLAWDKL (108 aa). Asp31 serves as a coordination point for AMP. Residue His47 coordinates Zn(2+). Positions 86, 92, and 94 each coordinate AMP. Residue His97 participates in Zn(2+) binding. The short motif at 97–101 is the Histidine triad motif element; it reads HIHFH. AMP is bound by residues His99 and His101. Catalysis depends on His99, which acts as the Tele-AMP-histidine intermediate.

It belongs to the HINT family.

Its subcellular location is the nucleus. The protein resides in the cytoplasm. The catalysed reaction is adenosine 5'-phosphoramidate + H2O = AMP + NH4(+). Hydrolyzes purine nucleotide phosphoramidates with a single phosphate group, including adenosine 5'monophosphoramidate (AMP-NH2), adenosine 5'monophosphomorpholidate (AMP-morpholidate) and guanosine 5'monophosphomorpholidate (GMP-morpholidate). Hydrolyzes lysyl-AMP (AMP-N-epsilon-(N-alpha-acetyl lysine methyl ester)) generated by lysine tRNA ligase, as well as Met-AMP, His-AMP and Asp-AMP, lysyl-GMP (GMP-N-epsilon-(N-alpha-acetyl lysine methyl ester)) and AMP-N-alanine methyl ester. May also function as scaffolding protein that mediates protein-protein interactions. The chain is Histidine triad nucleotide-binding protein from Entamoeba histolytica (strain ATCC 30459 / HM-1:IMSS / ABRM).